We begin with the raw amino-acid sequence, 395 residues long: Phosphoglycerate kinase (395 aa).

Residues 21–23, Arg-36, 59–62, Arg-114, and Arg-147 contribute to the substrate site; these read DIN and HFGR. ATP-binding positions include Lys-197, Glu-322, and 352 to 355; that span reads GGDT.

This sequence belongs to the phosphoglycerate kinase family. In terms of assembly, monomer.

It localises to the cytoplasm. It carries out the reaction (2R)-3-phosphoglycerate + ATP = (2R)-3-phospho-glyceroyl phosphate + ADP. Its pathway is carbohydrate degradation; glycolysis; pyruvate from D-glyceraldehyde 3-phosphate: step 2/5. The polypeptide is Phosphoglycerate kinase (Roseobacter denitrificans (strain ATCC 33942 / OCh 114) (Erythrobacter sp. (strain OCh 114))).